The following is a 480-amino-acid chain: Probable E3 ubiquitin protein ligase DRIPH (480 aa).

Residues Cys-16–Asn-57 form an RING-type zinc finger. Disordered stretches follow at residues Gly-93–Asn-133, Arg-167–Lys-193, Thr-241–Glu-261, and Val-280–Val-356. Positions Ser-103 to Thr-112 are enriched in basic residues. Residues Ser-113–Asn-133 are compositionally biased toward low complexity. Residues Lys-175–Lys-193 show a composition bias toward basic and acidic residues. Acidic residues predominate over residues Val-246–Val-260. Polar residues predominate over residues Gly-298 to Ser-309.

It carries out the reaction S-ubiquitinyl-[E2 ubiquitin-conjugating enzyme]-L-cysteine + [acceptor protein]-L-lysine = [E2 ubiquitin-conjugating enzyme]-L-cysteine + N(6)-ubiquitinyl-[acceptor protein]-L-lysine.. Its pathway is protein modification; protein ubiquitination. The sequence is that of Probable E3 ubiquitin protein ligase DRIPH from Arabidopsis thaliana (Mouse-ear cress).